We begin with the raw amino-acid sequence, 152 residues long: Protein-export protein SecB (152 aa).

It belongs to the SecB family. Homotetramer, a dimer of dimers. One homotetramer interacts with 1 SecA dimer.

It is found in the cytoplasm. Functionally, one of the proteins required for the normal export of preproteins out of the cell cytoplasm. It is a molecular chaperone that binds to a subset of precursor proteins, maintaining them in a translocation-competent state. It also specifically binds to its receptor SecA. This chain is Protein-export protein SecB, found in Dechloromonas aromatica (strain RCB).